A 319-amino-acid polypeptide reads, in one-letter code: Shiga-like toxin 2 subunit A (319 aa).

The signal sequence occupies residues 1 to 22; it reads MKCILFKWVLCLLLGFSSVSYS. The tract at residues 23 to 272 is A1; that stretch reads REFTIDFSTQ…CHHQGARSVR (250 aa). Residue glutamate 189 is part of the active site. Residues cysteine 263 and cysteine 282 are joined by a disulfide bond. The tract at residues 273–314 is A2; that stretch reads AVNEESQPECQITGDRPVIKINNTLWESNTAAAFLNRKSQFL.

The protein belongs to the ribosome-inactivating protein family. In terms of assembly, shiga-like toxin contains a single A subunit and multiple copies of a B subunit.

It localises to the secreted. It catalyses the reaction Endohydrolysis of the N-glycosidic bond at one specific adenosine on the 28S rRNA.. In terms of biological role, the A subunit is responsible for inhibiting protein synthesis through the catalytic inactivation of 60S ribosomal subunits. After endocytosis, the A subunit is cleaved by furin in two fragments, A1 and A2: A1 is the catalytically active fragment, and A2 is essential for holotoxin assembly with the B subunits. This Escherichia coli O157:H7 (Bacteriophage 933W) protein is Shiga-like toxin 2 subunit A (stxA2).